The sequence spans 111 residues: Probable 4-amino-4-deoxy-L-arabinose-phosphoundecaprenol flippase subunit ArnE (111 aa).

The Cytoplasmic portion of the chain corresponds to 1 to 37 (MIWLTLVFASLLSVAGQLCQKQATCFVAINKRRKHIA). A helical membrane pass occupies residues 38–58 (LWLGLALACLGLAMVLWLLVL). Residues 40-109 (LGLALACLGL…IIGGIVILGS (70 aa)) enclose the EamA domain. Over 59 to 60 (QN) the chain is Periplasmic. The chain crosses the membrane as a helical span at residues 61–81 (VPVGIAYPMLSLNFVWVTLAA). Over 82–87 (VKLWHE) the chain is Cytoplasmic. The helical transmembrane segment at 88–108 (PVSPRHWCGVAFIIGGIVILG) threads the bilayer. The Periplasmic portion of the chain corresponds to 109 to 111 (STV).

It belongs to the ArnE family. As to quaternary structure, heterodimer of ArnE and ArnF.

The protein resides in the cell inner membrane. Its pathway is bacterial outer membrane biogenesis; lipopolysaccharide biosynthesis. In terms of biological role, translocates 4-amino-4-deoxy-L-arabinose-phosphoundecaprenol (alpha-L-Ara4N-phosphoundecaprenol) from the cytoplasmic to the periplasmic side of the inner membrane. The polypeptide is Probable 4-amino-4-deoxy-L-arabinose-phosphoundecaprenol flippase subunit ArnE (Escherichia coli (strain 55989 / EAEC)).